The chain runs to 635 residues: Threonine--tRNA ligase (635 aa).

The TGS domain maps to methionine 1 to threonine 61. The catalytic stretch occupies residues aspartate 242–proline 532. Zn(2+) is bound by residues cysteine 333, histidine 384, and histidine 509.

It belongs to the class-II aminoacyl-tRNA synthetase family. As to quaternary structure, homodimer. Zn(2+) is required as a cofactor.

Its subcellular location is the cytoplasm. The catalysed reaction is tRNA(Thr) + L-threonine + ATP = L-threonyl-tRNA(Thr) + AMP + diphosphate + H(+). Functionally, catalyzes the attachment of threonine to tRNA(Thr) in a two-step reaction: L-threonine is first activated by ATP to form Thr-AMP and then transferred to the acceptor end of tRNA(Thr). Also edits incorrectly charged L-seryl-tRNA(Thr). The polypeptide is Threonine--tRNA ligase (Clostridium botulinum (strain Okra / Type B1)).